We begin with the raw amino-acid sequence, 212 residues long: Thymidylate kinase (212 aa).

Residues 16-21 (RAGKTT), R97, R182, and K192 each bind ATP.

It belongs to the thymidylate kinase family. Mg(2+) serves as cofactor.

The enzyme catalyses dTMP + ATP = dTDP + ADP. Its pathway is pyrimidine metabolism; dTTP biosynthesis. In terms of biological role, catalyzes the phosphorylation of thymidine monophosphate (dTMP) to thymidine diphosphate (dTDP), the immediate precursor for the DNA building block dTTP, with ATP as the preferred phosphoryl donor in the presence of Mg(2+). This is Thymidylate kinase (dtymk) from Danio rerio (Zebrafish).